Here is a 78-residue protein sequence, read N- to C-terminus: Large ribosomal subunit protein bL28 (78 aa).

It belongs to the bacterial ribosomal protein bL28 family.

In Shigella boydii serotype 4 (strain Sb227), this protein is Large ribosomal subunit protein bL28.